A 93-amino-acid chain; its full sequence is uncharacterized protein (93 aa).

The N-terminal stretch at 1-22 (MSIPNLSSVTQLLSIATGLVST) is a signal peptide. N5 carries an N-linked (GlcNAc...) asparagine; by host glycan.

This is an uncharacterized protein from Invertebrate iridescent virus 6 (IIV-6).